We begin with the raw amino-acid sequence, 461 residues long: Glycolipid 2-alpha-mannosyltransferase 2 (461 aa).

Topologically, residues 1–12 (MKPSIFYSSRQP) are cytoplasmic. A helical; Signal-anchor for type II membrane protein membrane pass occupies residues 13–35 (YLKYLAIILTTITIYVLTHSSYS). Residues 35–52 (SADPNINDVTTKPISETV) show a composition bias toward polar residues. The segment at 35 to 138 (SADPNINDVT…SSSKDPVKPE (104 aa)) is disordered. The Lumenal segment spans residues 36–461 (ADPNINDVTT…QKPKEWEKYQ (426 aa)). Low complexity-rich tracts occupy residues 61-70 (SSPEQQQQQP) and 106-116 (PKSSSSSPQQQ). Residues 117-126 (EKQDTKKESE) show a composition bias toward basic and acidic residues. The Nucleophile role is filled by glutamate 349.

Belongs to the glycosyltransferase 15 family.

The protein resides in the golgi apparatus membrane. Functionally, involved in O-glycosylation of cell wall and secreted proteins. Transfers an alpha-D-mannosyl residue from GDP-mannose into lipid-linked oligosaccharide, forming an alpha-(1-&gt;2)-D-mannosyl-D-mannose linkage. Mainly responsible for the addition of the third mannose residue in an O-linked mannose pentamer. Can also substitute for MNT1 by adding the second mannose residue. Important for adherence to host surfaces and for virulence. The sequence is that of Glycolipid 2-alpha-mannosyltransferase 2 (MNT2) from Candida albicans (strain SC5314 / ATCC MYA-2876) (Yeast).